We begin with the raw amino-acid sequence, 241 residues long: MANTTITWLGHASFLFVTPEGKRIVLDPWYEGNPSFPESAKAELEHVDAILLTHGHMDHTGNAITLAQQTKAPVAGIVELIGWVQGQGVDATQCIGFNKGGCIELAGIKATLTTAHHSSSISSGSISLYLGDPCGFILEFSDGCVVYHTGDTCVHGDMALMGEIYQPNVTILPIGDFYTMGPRQAAHALKLIGSKFAIPEHYGTFPALHGNPEALQSELNKLQLNTAIVALQPGEAWTYPA.

Belongs to the UPF0173 family.

The chain is UPF0173 metal-dependent hydrolase Haur_4333 from Herpetosiphon aurantiacus (strain ATCC 23779 / DSM 785 / 114-95).